The chain runs to 237 residues: Carbonyl reductase family member 4 (237 aa).

Residues 11–14 (SRGI), 34–35 (RN), aspartate 57, and 84–86 (AAG) each bind NADP(+). Residue serine 135 coordinates substrate. Residues tyrosine 148, lysine 152, and 181-183 (IHT) contribute to the NADP(+) site. The active-site Proton acceptor is the tyrosine 148.

This sequence belongs to the short-chain dehydrogenases/reductases (SDR) family. As to quaternary structure, homotetramer (in vitro). Heterotetramer with HSD17B8; contains two molecules each of HSD17B8 and CBR4.

Its subcellular location is the mitochondrion matrix. It participates in lipid metabolism; fatty acid biosynthesis. The heterotetramer with HSD17B8 has NADH-dependent 3-ketoacyl-acyl carrier protein reductase activity, and thereby plays a role in mitochondrial fatty acid biosynthesis. Within the heterotetramer, HSD17B8 binds NADH; CBR4 binds NADPD. The homotetramer has NADPH-dependent quinone reductase activity. Both homotetramer and the heterotetramer have broad in vitro substrate specificity and can reduce 9,10-phenanthrenequinone, 1,4-benzoquinone and various other o-quinones and p-quinones. This is Carbonyl reductase family member 4 (cbr4) from Danio rerio (Zebrafish).